We begin with the raw amino-acid sequence, 90 residues long: Probable Fe(2+)-trafficking protein (90 aa).

Belongs to the Fe(2+)-trafficking protein family.

Functionally, could be a mediator in iron transactions between iron acquisition and iron-requiring processes, such as synthesis and/or repair of Fe-S clusters in biosynthetic enzymes. The protein is Probable Fe(2+)-trafficking protein of Idiomarina loihiensis (strain ATCC BAA-735 / DSM 15497 / L2-TR).